A 241-amino-acid chain; its full sequence is Ribulose-phosphate 3-epimerase 1 (241 aa).

Residue Ser21 coordinates substrate. 3 residues coordinate a divalent metal cation: His46, Asp48, and His79. Asp48 (proton acceptor) is an active-site residue. Residues His79, 155–158 (GFGG), 192–194 (DGG), and 214–215 (GS) contribute to the substrate site. Residue Asp192 coordinates a divalent metal cation. Asp192 acts as the Proton donor in catalysis.

The protein belongs to the ribulose-phosphate 3-epimerase family. A divalent metal cation serves as cofactor.

The enzyme catalyses D-ribulose 5-phosphate = D-xylulose 5-phosphate. It functions in the pathway carbohydrate degradation. Catalyzes the reversible epimerization of D-ribulose 5-phosphate to D-xylulose 5-phosphate. In Cupriavidus necator (strain ATCC 17699 / DSM 428 / KCTC 22496 / NCIMB 10442 / H16 / Stanier 337) (Ralstonia eutropha), this protein is Ribulose-phosphate 3-epimerase 1.